The following is a 110-amino-acid chain: U-scoloptoxin(16)-Er6a (110 aa).

The first 26 residues, 1–26 (MTSTRKLSVSCLIVFMVSSLIAVSSG), serve as a signal peptide directing secretion.

This sequence belongs to the scoloptoxin-16 family. In terms of processing, contains 4 disulfide bonds. Expressed by the venom gland.

The protein resides in the secreted. The protein is U-scoloptoxin(16)-Er6a of Ethmostigmus rubripes (Giant centipede).